The chain runs to 519 residues: Acetylcholine receptor subunit gamma (519 aa).

Residues 1–22 form the signal peptide; it reads MCGGQRPLFLLPLLAVCLGAKG. The Extracellular portion of the chain corresponds to 23 to 240; sequence RNQEERLLGD…VVFYLLIQRK (218 aa). 2 N-linked (GlcNAc...) asparagine glycosylation sites follow: Asn52 and Asn163. Cys150 and Cys164 form a disulfide bridge. 3 helical membrane passes run 241 to 265, 274 to 292, and 308 to 329; these read PLFYVINIIAPCVLISSVAILIYFL, CTVAINVLLAQTVFLFLVA, and YLTFLLVVTILIVVNAVVVLNV. Over 330–476 the chain is Cytoplasmic; the sequence is SLRSPHTHSM…WFLVGRVLDR (147 aa). Residues 477–497 traverse the membrane as a helical segment; that stretch reads VCFLAMLSLFVCGTAGIFLMA.

Belongs to the ligand-gated ion channel (TC 1.A.9) family. Acetylcholine receptor (TC 1.A.9.1) subfamily. Gamma/CHRNG sub-subfamily. In terms of assembly, pentamer of two alpha chains, and one each of the beta, delta, and gamma (in immature muscle) or epsilon (in mature muscle) chains.

The protein localises to the postsynaptic cell membrane. Its subcellular location is the cell membrane. It catalyses the reaction K(+)(in) = K(+)(out). The catalysed reaction is Na(+)(in) = Na(+)(out). In terms of biological role, after binding acetylcholine, the AChR responds by an extensive change in conformation that affects all subunits and leads to opening of an ion-conducting channel across the plasma membrane. The chain is Acetylcholine receptor subunit gamma (CHRNG) from Bos taurus (Bovine).